Here is a 1459-residue protein sequence, read N- to C-terminus: PPE family protein PPE34 (1459 aa).

Belongs to the mycobacterial PPE family. Interacts with human TLR2.

The protein localises to the cell membrane. It localises to the secreted. Its subcellular location is the cell wall. The protein resides in the cell surface. Its function is as follows. Facilitates a shift in the ensuing immunity toward the Th2 phenotype and could aid in immune evasion by mycobacteria. Interacts with human Toll-like receptor 2 (TLR2) and triggers functional maturation of human dendritic cells (DCs), leading to secretion of IL-4, IL-5 and IL-10 from CD4(+) T cells and induction of Th2 immune response. Maturation of DCs involves PI3K, ERK1/2, p38 MAPK and NF-kappa-B signaling pathways. In Mycobacterium tuberculosis (strain ATCC 25618 / H37Rv), this protein is PPE family protein PPE34.